The primary structure comprises 500 residues: Galactose/methyl galactoside import ATP-binding protein MglA (500 aa).

ABC transporter domains lie at 8–243 (LEME…VGRD) and 257–500 (EMIL…AKYL). Position 40 to 47 (40 to 47 (GENGAGKS)) interacts with ATP.

The protein belongs to the ABC transporter superfamily. Galactose/methyl galactoside importer (TC 3.A.1.2.3) family. The complex is composed of one ATP-binding protein (MglA), two transmembrane proteins (MglC) and a solute-binding protein (MglB).

It localises to the cell inner membrane. The enzyme catalyses D-galactose(out) + ATP + H2O = D-galactose(in) + ADP + phosphate + H(+). The catalysed reaction is methyl beta-D-galactoside(out) + ATP + H2O = methyl beta-D-galactoside(in) + ADP + phosphate + H(+). Functionally, part of the ABC transporter complex MglABC involved in galactose/methyl galactoside import. Responsible for energy coupling to the transport system. The polypeptide is Galactose/methyl galactoside import ATP-binding protein MglA (Fusobacterium nucleatum subsp. nucleatum (strain ATCC 25586 / DSM 15643 / BCRC 10681 / CIP 101130 / JCM 8532 / KCTC 2640 / LMG 13131 / VPI 4355)).